Reading from the N-terminus, the 188-residue chain is Elongation factor P (188 aa).

Lysine 34 carries the post-translational modification N6-(3,6-diaminohexanoyl)-5-hydroxylysine.

Belongs to the elongation factor P family. May be beta-lysylated on the epsilon-amino group of Lys-34 by the combined action of EpmA and EpmB, and then hydroxylated on the C5 position of the same residue by EpmC (if this protein is present). Lysylation is critical for the stimulatory effect of EF-P on peptide-bond formation. The lysylation moiety may extend toward the peptidyltransferase center and stabilize the terminal 3-CCA end of the tRNA. Hydroxylation of the C5 position on Lys-34 may allow additional potential stabilizing hydrogen-bond interactions with the P-tRNA.

It localises to the cytoplasm. Its pathway is protein biosynthesis; polypeptide chain elongation. Functionally, involved in peptide bond synthesis. Alleviates ribosome stalling that occurs when 3 or more consecutive Pro residues or the sequence PPG is present in a protein, possibly by augmenting the peptidyl transferase activity of the ribosome. Modification of Lys-34 is required for alleviation. The protein is Elongation factor P of Haemophilus influenzae (strain 86-028NP).